Reading from the N-terminus, the 360-residue chain is Insulin gene enhancer protein ISL-2 (360 aa).

2 LIM zinc-binding domains span residues 25–86 (AMCV…RLFG) and 87–149 (IKCA…LLER). The tract at residues 151 to 177 (AAGSPRSPGPLPGTPPGLHLPDAGSGQ) is disordered. Phosphoserine occurs at positions 154 and 157. A DNA-binding region (homeobox) is located at residues 192 to 251 (TTRVRTVLNEKQLHTLRTCYAANPRPDALMKEQLVEMTGLSPRVIRVWFQNKRCKDKKKS). An LIM-binding domain (LID) region spans residues 273–302 (GTLLVAGSPSAHENAVQGSAVEVQTYQPPW). S280 is subject to Phosphoserine. The segment covering 328-337 (SGSLGNSSGS) has biased composition (low complexity). The tract at residues 328–360 (SGSLGNSSGSDVTSLSSQLPDTPNSMVPSPVET) is disordered. The segment covering 338–360 (DVTSLSSQLPDTPNSMVPSPVET) has biased composition (polar residues).

As to quaternary structure, interacts with LHX4.

The protein resides in the nucleus. Transcriptional factor that defines subclasses of motoneurons that segregate into columns in the spinal cord and select distinct axon pathways. The polypeptide is Insulin gene enhancer protein ISL-2 (Isl2) (Rattus norvegicus (Rat)).